The primary structure comprises 199 residues: Cytochrome b (199 aa).

4 helical membrane passes run 1 to 8 (LTGLFLAM), 32 to 53 (WLIR…YFHI), 68 to 88 (WNIG…GYVL), and 133 to 153 (FFAF…LHLL). Heme b-binding residues include H38 and H52. The heme b site is built by H137 and H151. H156 lines the a ubiquinone pocket. A helical membrane pass occupies residues 181-199 (YKDLLGFAILLVALASLAH).

Belongs to the cytochrome b family. The cytochrome bc1 complex contains 3 respiratory subunits (MT-CYB, CYC1 and UQCRFS1), 2 core proteins (UQCRC1 and UQCRC2) and probably 6 low-molecular weight proteins. Heme b is required as a cofactor.

It is found in the mitochondrion inner membrane. Component of the ubiquinol-cytochrome c reductase complex (complex III or cytochrome b-c1 complex) that is part of the mitochondrial respiratory chain. The b-c1 complex mediates electron transfer from ubiquinol to cytochrome c. Contributes to the generation of a proton gradient across the mitochondrial membrane that is then used for ATP synthesis. This is Cytochrome b (mt-cyb) from Sarda chiliensis (Pacific bonito).